We begin with the raw amino-acid sequence, 153 residues long: Endoribonuclease YbeY (153 aa).

H114, H118, and H124 together coordinate Zn(2+).

Belongs to the endoribonuclease YbeY family. Zn(2+) serves as cofactor.

It is found in the cytoplasm. Single strand-specific metallo-endoribonuclease involved in late-stage 70S ribosome quality control and in maturation of the 3' terminus of the 16S rRNA. This chain is Endoribonuclease YbeY, found in Shewanella oneidensis (strain ATCC 700550 / JCM 31522 / CIP 106686 / LMG 19005 / NCIMB 14063 / MR-1).